A 358-amino-acid polypeptide reads, in one-letter code: DnaJ homolog subfamily B member 11 (358 aa).

A signal peptide spans 1–22 (MAPQNLSTFCLLLLYLIGTVIA). Positions 25–90 (DFYKILGVPR…EKRKQYDTYG (66 aa)) constitute a J domain. Position 188 is a phosphothreonine (Thr188). The N-linked (GlcNAc...) asparagine glycan is linked to Asn261.

In terms of assembly, part of a large chaperone multiprotein complex comprising DNAJB11, HSP90B1, HSPA5, HYOU, PDIA2, PDIA4, PDIA6, PPIB, SDF2L1, UGGT1 and very small amounts of ERP29, but not, or at very low levels, CALR nor CANX. Binds to denatured substrates in an ATP-independent manner. Interacts via the J domain with HSPA5 in an ATP-dependent manner. Contains high-mannose Endo H-sensitive carbohydrates. In terms of processing, cys-169, Cys-171, Cys-193 and Cys-196 form intramolecular disulfide bonds. The preferential partner for each Cys is not known.

The protein resides in the endoplasmic reticulum lumen. Functionally, as a co-chaperone for HSPA5 it is required for proper folding, trafficking or degradation of proteins. Binds directly to both unfolded proteins that are substrates for ERAD and nascent unfolded peptide chains, but dissociates from the HSPA5-unfolded protein complex before folding is completed. May help recruiting HSPA5 and other chaperones to the substrate. Stimulates HSPA5 ATPase activity. It is necessary for maturation and correct trafficking of PKD1. The polypeptide is DnaJ homolog subfamily B member 11 (Dnajb11) (Mus musculus (Mouse)).